The chain runs to 289 residues: MKKIKVKAYAKINLSLDVLGKRKDGYHEISTVMQSIDLADILEFEKSEIVKVFCSGHRVPEGEDNLIVKVINFLKEKYQIEEGVLVRLDKKIPLAAGLAGGSADAAATIVALDKLWNLNMSADEKKEIALKVGADVPFCLEGGTKLAKGIGEIFEDLNVPHMNLLLVKPDIEIFTKKIYDKWDRLNFKSHHATCSVVQAIQEGNIYKIAENIKNDLELVTSRECEVINQIKEELLKKGALGCAMSGSGPTVYGIFDDLQKLIKAYKNLEGIYSFVFFSKTIDKGLELYE.

Lysine 11 is a catalytic residue. Residue 93 to 103 (PLAAGLAGGSA) participates in ATP binding. Aspartate 135 is an active-site residue.

The protein belongs to the GHMP kinase family. IspE subfamily.

It catalyses the reaction 4-CDP-2-C-methyl-D-erythritol + ATP = 4-CDP-2-C-methyl-D-erythritol 2-phosphate + ADP + H(+). The protein operates within isoprenoid biosynthesis; isopentenyl diphosphate biosynthesis via DXP pathway; isopentenyl diphosphate from 1-deoxy-D-xylulose 5-phosphate: step 3/6. In terms of biological role, catalyzes the phosphorylation of the position 2 hydroxy group of 4-diphosphocytidyl-2C-methyl-D-erythritol. The chain is 4-diphosphocytidyl-2-C-methyl-D-erythritol kinase from Thermoanaerobacter sp. (strain X514).